A 209-amino-acid chain; its full sequence is Large ribosomal subunit protein uL3 (209 aa).

The segment at 127 to 147 (YSRGPMGHGSKSHRVAGARSA) is disordered.

This sequence belongs to the universal ribosomal protein uL3 family. Part of the 50S ribosomal subunit. Forms a cluster with proteins L14 and L19.

Its function is as follows. One of the primary rRNA binding proteins, it binds directly near the 3'-end of the 23S rRNA, where it nucleates assembly of the 50S subunit. The chain is Large ribosomal subunit protein uL3 from Finegoldia magna (strain ATCC 29328 / DSM 20472 / WAL 2508) (Peptostreptococcus magnus).